The sequence spans 578 residues: uncharacterized protein (578 aa).

This is an uncharacterized protein from Eikenella corrodens.